Reading from the N-terminus, the 587-residue chain is L-ascorbate oxidase (587 aa).

The N-terminal stretch at 1-33 (MAKVADKPFFPKPFLSFLVLSIIFGFGITLSEA) is a signal peptide. 2 Plastocyanin-like domains span residues 38 to 157 (IKHY…LIVD) and 169 to 335 (DEEI…NYLP). Cystine bridges form between C54/C236, C116/C574, and C215/C228. 4 residues coordinate Cu cation: H95, H97, H139, and H141. N-linked (GlcNAc...) asparagine glycans are attached at residues N360, N401, and N475. A Plastocyanin-like 3 domain is found at 379 to 559 (NRRLFLLNTQ…HMGMGVVFAE (181 aa)). Cu cation contacts are provided by H480, H483, H485, H542, C543, H544, H548, and M553.

Belongs to the multicopper oxidase family. As to quaternary structure, dimer. Cu cation is required as a cofactor.

It is found in the secreted. It carries out the reaction 4 L-ascorbate + O2 = 4 monodehydro-L-ascorbate radical + 2 H2O. Functionally, may be involved in a redox system involving ascorbic acid. This chain is L-ascorbate oxidase, found in Cucumis sativus (Cucumber).